We begin with the raw amino-acid sequence, 319 residues long: Acetyl-coenzyme A carboxylase carboxyl transferase subunit alpha (319 aa).

Residues 39-293 (RLQKKSNDLT…KAVLEKQLHE (255 aa)) form the CoA carboxyltransferase C-terminal domain.

The protein belongs to the AccA family. In terms of assembly, acetyl-CoA carboxylase is a heterohexamer composed of biotin carboxyl carrier protein (AccB), biotin carboxylase (AccC) and two subunits each of ACCase subunit alpha (AccA) and ACCase subunit beta (AccD).

The protein localises to the cytoplasm. It carries out the reaction N(6)-carboxybiotinyl-L-lysyl-[protein] + acetyl-CoA = N(6)-biotinyl-L-lysyl-[protein] + malonyl-CoA. Its pathway is lipid metabolism; malonyl-CoA biosynthesis; malonyl-CoA from acetyl-CoA: step 1/1. Its function is as follows. Component of the acetyl coenzyme A carboxylase (ACC) complex. First, biotin carboxylase catalyzes the carboxylation of biotin on its carrier protein (BCCP) and then the CO(2) group is transferred by the carboxyltransferase to acetyl-CoA to form malonyl-CoA. The protein is Acetyl-coenzyme A carboxylase carboxyl transferase subunit alpha of Neisseria meningitidis serogroup C (strain 053442).